The sequence spans 128 residues: Fluoride-specific ion channel FluC (128 aa).

A run of 4 helical transmembrane segments spans residues 5–25 (IVAIFVGAGLGAVLRWFLGLA), 35–55 (LGTLAANLLGGYAIGIAAVVF), 67–87 (LFVITGFLGGLTTFSTYSVEV), and 96–116 (FGWAFAVAVLHLTGSFTLTAL). 2 residues coordinate Na(+): Gly75 and Thr78.

It belongs to the fluoride channel Fluc/FEX (TC 1.A.43) family.

The protein localises to the cell inner membrane. The enzyme catalyses fluoride(in) = fluoride(out). Na(+) is not transported, but it plays an essential structural role and its presence is essential for fluoride channel function. Functionally, fluoride-specific ion channel. Important for reducing fluoride concentration in the cell, thus reducing its toxicity. This is Fluoride-specific ion channel FluC from Burkholderia vietnamiensis (strain G4 / LMG 22486) (Burkholderia cepacia (strain R1808)).